Reading from the N-terminus, the 518-residue chain is Cytochrome P450 704C1 (518 aa).

The next 2 membrane-spanning stretches (helical) occupy residues isoleucine 5–serine 25 and valine 299–isoleucine 319. A heme-binding site is contributed by cysteine 461.

This sequence belongs to the cytochrome P450 family. Heme is required as a cofactor.

The protein localises to the membrane. The sequence is that of Cytochrome P450 704C1 (CYP704C1) from Pinus taeda (Loblolly pine).